The sequence spans 382 residues: Trophoblast glycoprotein-like (382 aa).

The N-terminal stretch at 1–26 is a signal peptide; that stretch reads MAPRAGQPGLQGLLLVAAALSQPAAP. Intrachain disulfides connect cysteine 27–cysteine 33 and cysteine 31–cysteine 43. The Extracellular portion of the chain corresponds to 27–307; the sequence is CPFQCYCFGG…EAAGPELEAS (281 aa). LRR repeat units follow at residues 57 to 80, 93 to 116, 117 to 140, 171 to 194, and 196 to 217; these read PPDA…AFAG, LPLL…AFDG, LPSL…AFRG, LAEL…ALRL, and RLEQ…ELRA. Residue asparagine 62 is glycosylated (N-linked (GlcNAc...) asparagine). Disulfide bonds link cysteine 238–cysteine 264 and cysteine 240–cysteine 285. The helical transmembrane segment at 308 to 328 threads the bilayer; that stretch reads YVFFGLVLALIGLIFLMVLYL. Topologically, residues 329 to 382 are cytoplasmic; sequence NRRGIQRWMRNLREACRDQMEGYHYRYEQDADPRRAPAPAAPAGSRATSPGSGL. The interval 358 to 382 is disordered; it reads DADPRRAPAPAAPAGSRATSPGSGL. Positions 365 to 382 are enriched in low complexity; that stretch reads PAPAAPAGSRATSPGSGL.

It localises to the membrane. The polypeptide is Trophoblast glycoprotein-like (TPBGL) (Homo sapiens (Human)).